A 279-amino-acid polypeptide reads, in one-letter code: Probable nicotinate-nucleotide pyrophosphorylase [carboxylating] (279 aa).

Residues Arg90, Thr125–Lys127, Arg149, Lys159, Glu189, Asp210, Ser238–Gly240, and Met259–Phe261 contribute to the substrate site.

The protein belongs to the NadC/ModD family. As to quaternary structure, hexamer formed by 3 homodimers.

The enzyme catalyses nicotinate beta-D-ribonucleotide + CO2 + diphosphate = quinolinate + 5-phospho-alpha-D-ribose 1-diphosphate + 2 H(+). It participates in cofactor biosynthesis; NAD(+) biosynthesis; nicotinate D-ribonucleotide from quinolinate: step 1/1. Functionally, involved in the catabolism of quinolinic acid (QA). This Methanothermobacter thermautotrophicus (strain ATCC 29096 / DSM 1053 / JCM 10044 / NBRC 100330 / Delta H) (Methanobacterium thermoautotrophicum) protein is Probable nicotinate-nucleotide pyrophosphorylase [carboxylating] (nadC).